The following is a 504-amino-acid chain: Ribonuclease Y (504 aa).

Residues 194–279 form the KH domain; that stretch reads TVHVVSLPND…EMVEKAKQEV (86 aa). Positions 320-413 constitute an HD domain; the sequence is VLKHSMEVAY…VQAADAISAA (94 aa).

This sequence belongs to the RNase Y family.

In terms of biological role, endoribonuclease that initiates mRNA decay. The sequence is that of Ribonuclease Y from Clostridium novyi (strain NT).